Here is a 349-residue protein sequence, read N- to C-terminus: MKEVGIVGYGSDLPKYRIKAEDIAGAWGKDAQAIKRGLVVNEKSVPGPDEDTATIAVQSARRALSRAGINPKDIGAVYVGSESHPYAVKPTSGIVAEACGVSPDFTAADLEFACKAGTAGIQMCMGLVGSEMMEYAMAVGADTAQGAPGDALEYTAAAGGAAFIIGAKKEEFIAKFNGTYSYTTDTPDFWRREHEHYPKHGGRFTGEPAYFKHVLNGAKGMMEKMGTTSKDYDYCVFHQPNGKFYLTAAKKLGFTEEQYKYGLLTPYLGNTYSGAVPLGLSNILDHAKADDRIFVVSYGSGAGSDAFDITVTDRISEVVDKEITTEKLLEQKKYVDYAVYLKYRGKIRM.

(3S)-3-hydroxy-3-methylglutaryl-CoA contacts are provided by aspartate 30 and alanine 31. Glutamate 82 (proton donor/acceptor) is an active-site residue. The (3S)-3-hydroxy-3-methylglutaryl-CoA site is built by cysteine 114 and threonine 155. Cysteine 114 acts as the Acyl-thioester intermediate in catalysis. Arginine 203 is a CoA binding site. Residues threonine 205 and histidine 238 each coordinate (3S)-3-hydroxy-3-methylglutaryl-CoA. Histidine 238 (proton donor/acceptor) is an active-site residue. Lysine 243 provides a ligand contact to CoA. Asparagine 270 and serine 300 together coordinate (3S)-3-hydroxy-3-methylglutaryl-CoA.

Belongs to the thiolase-like superfamily. Archaeal HMG-CoA synthase family. As to quaternary structure, interacts with acetoacetyl-CoA thiolase that catalyzes the precedent step in the pathway and with a DUF35 protein. The acetoacetyl-CoA thiolase/HMG-CoA synthase complex channels the intermediate via a fused CoA-binding site, which allows for efficient coupling of the endergonic thiolase reaction with the exergonic HMGCS reaction.

It catalyses the reaction acetoacetyl-CoA + acetyl-CoA + H2O = (3S)-3-hydroxy-3-methylglutaryl-CoA + CoA + H(+). The protein operates within metabolic intermediate biosynthesis; (R)-mevalonate biosynthesis; (R)-mevalonate from acetyl-CoA: step 2/3. In terms of biological role, catalyzes the condensation of acetyl-CoA with acetoacetyl-CoA to form 3-hydroxy-3-methylglutaryl-CoA (HMG-CoA). Functions in the mevalonate (MVA) pathway leading to isopentenyl diphosphate (IPP), a key precursor for the biosynthesis of isoprenoid compounds that are building blocks of archaeal membrane lipids. This chain is Hydroxymethylglutaryl-CoA synthase, found in Methanococcus maripaludis (strain DSM 14266 / JCM 13030 / NBRC 101832 / S2 / LL).